Consider the following 946-residue polypeptide: MKPLSSPLQQYWQTVVERLPEPLAEESLSAQAKLVLTFSDFVQDSVIAHPEWLMELESQPPQADEWQHYAAWLQEALSNVSDEAGLMRELRLFRRRIMVRIAWAQTLALVTEESILQQLSYLAETLIVAARDWLYDACCREWGTPCNAQGEAQPLLILGMGKLGGGELNFSSDIDLIFAWPEHGCTQGGRRELDNAQFFTRMGQRLIKVLDQPTQDGFVYRVDMRLRPFGESGPLVLSFAALEDYYQEQGRDWERYAMVKARIMGDSEGVYANELRAMLRPFVFRRYIDFSVIQSLRNMKGMIAREVRRRGLTDNIKLGAGGIREIEFIVQVFQLIRGGREPSLQSRSLLPTLSVIAALHLFSENDAKQLRVAYLFLRRLENLLQSINDEQTQTLPSDELNRARLAWAMDFADWPQLTGVLTAHMTNVRRVFNELIGDDESETQEESLSEQWRELWQDALQEDDTTPVLAHLSEDDRKQVLTLIADFRKELDKRTIGPRGRQVLDHLMPHLLSDVCAREDAAVTLSRITALLVGIVTRTTYLELLSEFPAALKHLISLCAASPMIASQLARYPLLLDELLDPNTLYQPTATDAYRDELRQYLLRVPEDDEEQQLEALRQFKQAQLLRIAAADIAGTLPVMKVSDHLTWLAEAMIDAVVQQAWVQMVARYGKPNHLNEREGRGFAVVGYGKLGGWELGYSSDLDLIFLHDCPMDAMTDGEREIDVRQFYLRLAQRIMHLFSTRTSSGILYEVDARLRPSGAAGMLVTSAEAFADYQKNEAWTWEHQALVRARVVYGDPQLTAHFDAVRREIMALPREGKTLQTEVREMREKMRAHLGNKHRDRFDIKADEGGITDIEFITQYLVLRYAHEKPKLTRWSDNVRILELLAQNDIMEEQEAMVLTRAYTTLRDELHHLALQELPGHVSEDCFTAERDLVRASWQKWLVEE.

Residues 1-440 are adenylyl removase; the sequence is MKPLSSPLQQ…VFNELIGDDE (440 aa). The adenylyl transferase stretch occupies residues 449-946; the sequence is SEQWRELWQD…ASWQKWLVEE (498 aa).

The protein belongs to the GlnE family. Mg(2+) is required as a cofactor.

It catalyses the reaction [glutamine synthetase]-O(4)-(5'-adenylyl)-L-tyrosine + phosphate = [glutamine synthetase]-L-tyrosine + ADP. It carries out the reaction [glutamine synthetase]-L-tyrosine + ATP = [glutamine synthetase]-O(4)-(5'-adenylyl)-L-tyrosine + diphosphate. Functionally, involved in the regulation of glutamine synthetase GlnA, a key enzyme in the process to assimilate ammonia. When cellular nitrogen levels are high, the C-terminal adenylyl transferase (AT) inactivates GlnA by covalent transfer of an adenylyl group from ATP to specific tyrosine residue of GlnA, thus reducing its activity. Conversely, when nitrogen levels are low, the N-terminal adenylyl removase (AR) activates GlnA by removing the adenylyl group by phosphorolysis, increasing its activity. The regulatory region of GlnE binds the signal transduction protein PII (GlnB) which indicates the nitrogen status of the cell. The chain is Bifunctional glutamine synthetase adenylyltransferase/adenylyl-removing enzyme from Shigella dysenteriae serotype 1 (strain Sd197).